The chain runs to 121 residues: Ribonuclease P protein component 4 (121 aa).

Residues Cys63, Cys66, Cys89, and Cys92 each contribute to the Zn(2+) site.

It belongs to the eukaryotic/archaeal RNase P protein component 4 family. In terms of assembly, consists of a catalytic RNA component and at least 4-5 protein subunits. Requires Zn(2+) as cofactor.

It is found in the cytoplasm. The enzyme catalyses Endonucleolytic cleavage of RNA, removing 5'-extranucleotides from tRNA precursor.. Functionally, part of ribonuclease P, a protein complex that generates mature tRNA molecules by cleaving their 5'-ends. This Methanobrevibacter smithii (strain ATCC 35061 / DSM 861 / OCM 144 / PS) protein is Ribonuclease P protein component 4.